The following is a 277-amino-acid chain: Inositol monophosphatase 1 (277 aa).

The Mg(2+) site is built by E70, D90, I92, and D93. Residue E70 participates in substrate binding. Residue 92-95 (IDGT) participates in substrate binding. At T168 the chain carries Phosphothreonine. Substrate is bound by residues 194 to 196 (GTA), E213, and D220. D220 provides a ligand contact to Mg(2+).

This sequence belongs to the inositol monophosphatase superfamily. In terms of assembly, homodimer. It depends on Mg(2+) as a cofactor. The N-terminus is blocked.

Its subcellular location is the cytoplasm. The enzyme catalyses a myo-inositol phosphate + H2O = myo-inositol + phosphate. It carries out the reaction 1D-myo-inositol 1-phosphate + H2O = myo-inositol + phosphate. It catalyses the reaction 1D-myo-inositol 2-phosphate + H2O = myo-inositol + phosphate. The catalysed reaction is 1D-myo-inositol 3-phosphate + H2O = myo-inositol + phosphate. The enzyme catalyses 1D-myo-inositol 4-phosphate + H2O = myo-inositol + phosphate. It carries out the reaction 1D-myo-inositol 5-phosphate + H2O = myo-inositol + phosphate. It catalyses the reaction 1D-myo-inositol 6-phosphate + H2O = myo-inositol + phosphate. The catalysed reaction is scyllo-inositol 1-phosphate + H2O = scyllo-inositol + phosphate. The enzyme catalyses alpha-D-galactose 1-phosphate + H2O = D-galactose + phosphate. It carries out the reaction alpha-D-glucose 1-phosphate + H2O = D-glucose + phosphate. It catalyses the reaction D-glucose 6-phosphate + H2O = D-glucose + phosphate. The catalysed reaction is beta-D-fructose 1-phosphate + H2O = D-fructose + phosphate. The enzyme catalyses glycerol 2-phosphate + H2O = glycerol + phosphate. It carries out the reaction adenosine 2'-phosphate + H2O = adenosine + phosphate. Its pathway is polyol metabolism; myo-inositol biosynthesis; myo-inositol from D-glucose 6-phosphate: step 2/2. Activity with myo-inositol monophosphate and D-galactose 1-phosphate is inhibited by Li(+), Ca(2+) and Mn(2+), but also by Mg(2+) at concentrations above 3 mM. Its function is as follows. Phosphatase involved in the dephosphorylation of myo-inositol monophosphate to generate myo-inositol. Is also able to dephosphorylate scyllo-inositol-phosphate, myo-inositol 1,4-diphosphate, scyllo-inositol-1,3-diphosphate and scyllo-inositol-1,4-diphosphate. Also dephosphorylates in vitro other sugar-phosphates including D-galactose-1-phosphate, glucose-1-phosphate, glucose-6-phosphate, fructose-1-phosphate, beta-glycerophosphate and 2'-AMP. Responsible for the provision of inositol required for synthesis of phosphatidylinositol and polyphosphoinositides, and involved in maintaining normal brain function. Has been implicated as the pharmacological target for lithium Li(+) action in brain. Is equally active with myo-inositol monophosphate and D-galactose 1-phosphate. This is Inositol monophosphatase 1 (IMPA1) from Bos taurus (Bovine).